Consider the following 250-residue polypeptide: 1-acyl-sn-glycerol-3-phosphate acyltransferase (250 aa).

The short motif at 88–93 is the HXXXXD motif element; the sequence is HIAAMD.

It belongs to the 1-acyl-sn-glycerol-3-phosphate acyltransferase family.

The catalysed reaction is a 1-acyl-sn-glycero-3-phosphate + an acyl-CoA = a 1,2-diacyl-sn-glycero-3-phosphate + CoA. It participates in phospholipid metabolism; CDP-diacylglycerol biosynthesis; CDP-diacylglycerol from sn-glycerol 3-phosphate: step 2/3. In terms of biological role, converts lysophosphatidic acid (LPA) into phosphatidic acid by incorporating acyl moiety at the 2 position. The sequence is that of 1-acyl-sn-glycerol-3-phosphate acyltransferase (plsC) from Borreliella burgdorferi (strain ATCC 35210 / DSM 4680 / CIP 102532 / B31) (Borrelia burgdorferi).